Reading from the N-terminus, the 1318-residue chain is DNA-directed RNA polymerase subunit beta' (1318 aa).

Positions 60, 62, 75, and 78 each coordinate Zn(2+). Positions 535, 537, and 539 each coordinate Mg(2+). Cysteine 890, cysteine 967, cysteine 974, and cysteine 977 together coordinate Zn(2+).

Belongs to the RNA polymerase beta' chain family. In terms of assembly, the RNAP catalytic core consists of 2 alpha, 1 beta, 1 beta' and 1 omega subunit. When a sigma factor is associated with the core the holoenzyme is formed, which can initiate transcription. Mg(2+) serves as cofactor. Zn(2+) is required as a cofactor.

The catalysed reaction is RNA(n) + a ribonucleoside 5'-triphosphate = RNA(n+1) + diphosphate. DNA-dependent RNA polymerase catalyzes the transcription of DNA into RNA using the four ribonucleoside triphosphates as substrates. The sequence is that of DNA-directed RNA polymerase subunit beta' from Rhodococcus erythropolis (strain PR4 / NBRC 100887).